The sequence spans 101 residues: MSTIADPRDILLAPVISEKSYGLIEEGTYTFLVHPDSNKTQIKIAVEKIFGVTVTSVNTANRQGKRKRTRFGYGKRKDTKRALVTLSADSKPIEIFGGPVA.

It belongs to the universal ribosomal protein uL23 family. As to quaternary structure, part of the 50S ribosomal subunit. Contacts protein L29, and trigger factor when it is bound to the ribosome.

Its function is as follows. One of the early assembly proteins it binds 23S rRNA. One of the proteins that surrounds the polypeptide exit tunnel on the outside of the ribosome. Forms the main docking site for trigger factor binding to the ribosome. The polypeptide is Large ribosomal subunit protein uL23 (Rhodococcus jostii (strain RHA1)).